Reading from the N-terminus, the 162-residue chain is Chemoreceptor glutamine deamidase CheD (162 aa).

This sequence belongs to the CheD family. As to quaternary structure, forms a complex with CheC.

The catalysed reaction is L-glutaminyl-[protein] + H2O = L-glutamyl-[protein] + NH4(+). Deamidates glutamine residues to glutamate on methyl-accepting chemotaxis receptors (MCPs). CheD-mediated MCP deamidation is required for productive communication of the conformational signals of the chemoreceptors to the CheA kinase. The sequence is that of Chemoreceptor glutamine deamidase CheD from Halalkalibacterium halodurans (strain ATCC BAA-125 / DSM 18197 / FERM 7344 / JCM 9153 / C-125) (Bacillus halodurans).